A 76-amino-acid polypeptide reads, in one-letter code: Gas vesicle protein A1 (76 aa).

Binds to GvpF1 regions lie at residues 1 to 22 (MAQP…KGVV) and 2 to 43 (AQPD…EARV). The alpha helix 1 stretch occupies residues 9-19 (LAEVLDRVLDK). The tract at residues 23–31 (VDVWARVSL) is beta-strand 1. Residues 32-34 (VGI) form a beta turn region. A beta-strand 2 region spans residues 35-43 (EILTVEARV). Residues 48–67 (VDTFLHYAEEIAKIEQAELT) form an alpha helix 2 region.

It belongs to the gas vesicle GvpA family. As to quaternary structure, major component of the gas vesicle shell which is 2 nm thick and consists of a single layer of the protein. It forms 4.6 nm-wide ribs nearly perpendicular to the long axis of the vesicle. Modeled as antiparallel homodimers. The ribs form a low-pitch helix rather than a stack of hoops. Interacts with GvpF1 via its N-terminus (residues 1-43) in early growth stages, none of the other GvpG1 to GvpM1 proteins were seen to directly bind GvpA1 in H.volcanii experiments. Might interact with GvpJ1. Might interact with GvpG1, GvpH1, GvpJ1, GvpM1, GvpN1 and GvpO1.

The protein localises to the gas vesicle shell. Functionally, gas vesicles are hollow, gas filled proteinaceous nanostructures found in several microbial planktonic microorganisms. They allow positioning of halobacteria at the optimal depth for growth in the poorly aerated shallow brine pools of their habitat. GvpA forms the protein shell. The critical collapse pressure (CCP) of p-vac gas vesicles is 0.66 MPa; mutating residues in p-gvpA to those found in c-gvpA increases the CCP. These residues partially and independently control the width and strength of gas vesicles. In stationary phase gas vesicles, about 30 times more GvpA1 is found than GvpA2. Expression of a 9.5 kb p-vac DNA fragment containing 2 divergently transcribed regions (gvpD-gvpE-gvpF-gvpG-gvpH-gvpI-gvpJ-gvpK-gvpL-gvpM and gvpA-gvpC-gvpN-gvpO) allows H.volcanii to produce gas vesicles. All site-directed mutagenesis is tested in H.volcanii. A minimal gas vesicle can be made in H.volcanii by gvpA1-gvpO1 plus gvpF1-gvpG1-gvpJ1-gvpK1-gvpL1-gvpM1; lack of enough GvpJ1 prevents their formation. A similar region restores gas vesicle production in H.halobium without the p-vac locus, but it still has the c-vac locus. The polypeptide is Gas vesicle protein A1 (Halobacterium salinarum (strain ATCC 700922 / JCM 11081 / NRC-1) (Halobacterium halobium)).